The following is a 354-amino-acid chain: L-Lys-D/L-Arg epimerase (354 aa).

Residues Thr-135 and 160–162 each bind substrate; that span reads KIK. 3 residues coordinate Mg(2+): Asp-190, Glu-215, and Asp-240. Residues Lys-265, Asp-295, and 318 to 320 each bind substrate; that span reads DLD.

Belongs to the mandelate racemase/muconate lactonizing enzyme family. It depends on Mg(2+) as a cofactor.

Functionally, catalyzes the epimerization of L-Lys-L-Arg to L-Lys-D-Arg (in vitro). Catalyzes the epimerization of positively charged dipeptides, with a preference for substrates with a basic amino acid in the second position. Has epimerase activity with L-Lys-L-Lys, L-Arg-L-Arg, L-Val-L-Arg, L-Val-L-Lys and L-Ala-L-Arg (in vitro). The chain is L-Lys-D/L-Arg epimerase from Desulforapulum autotrophicum (strain ATCC 43914 / DSM 3382 / VKM B-1955 / HRM2) (Desulfobacterium autotrophicum).